We begin with the raw amino-acid sequence, 1121 residues long: CRISPR-associated endonuclease Cas9 1 (1121 aa).

Residue D9 is the For RuvC-like nuclease domain of the active site. Residues D9, E509, and E513 each contribute to the Mg(2+) site. The 169-residue stretch at E516–L684 folds into the HNH Cas9-type domain. H599 functions as the Proton acceptor for HNH nuclease domain in the catalytic mechanism. A Mg(2+)-binding site is contributed by H738.

Belongs to the CRISPR-associated protein Cas9 family. Subtype II-A subfamily. In terms of assembly, monomer. Binds crRNA and tracrRNA. Mg(2+) is required as a cofactor.

CRISPR (clustered regularly interspaced short palindromic repeat) is an adaptive immune system that provides protection against mobile genetic elements (viruses, transposable elements and conjugative plasmids). CRISPR clusters contain spacers, sequences complementary to antecedent mobile elements, and target invading nucleic acids. CRISPR clusters are transcribed and processed into CRISPR RNA (crRNA). In type II CRISPR systems correct processing of pre-crRNA requires a trans-encoded small RNA (tracrRNA), endogenous ribonuclease 3 (rnc) and this protein. The tracrRNA serves as a guide for ribonuclease 3-aided processing of pre-crRNA. Subsequently Cas9/crRNA/tracrRNA endonucleolytically cleaves linear or circular dsDNA target complementary to the spacer; Cas9 is inactive in the absence of the 2 guide RNAs (gRNA). Cas9 recognizes the protospacer adjacent motif (PAM) in the CRISPR repeat sequences to help distinguish self versus nonself, as targets within the bacterial CRISPR locus do not have PAMs. PAM recognition is also required for catalytic activity. Cuts target DNA when Cas9 and gRNAs are mixed. This Streptococcus thermophilus (strain ATCC BAA-491 / LMD-9) protein is CRISPR-associated endonuclease Cas9 1.